The primary structure comprises 190 residues: Hypoxanthine/guanine phosphoribosyltransferase (190 aa).

The protein belongs to the purine/pyrimidine phosphoribosyltransferase family. Archaeal HPRT subfamily. In terms of assembly, homodimer.

Its subcellular location is the cytoplasm. The enzyme catalyses IMP + diphosphate = hypoxanthine + 5-phospho-alpha-D-ribose 1-diphosphate. It catalyses the reaction GMP + diphosphate = guanine + 5-phospho-alpha-D-ribose 1-diphosphate. Its pathway is purine metabolism; IMP biosynthesis via salvage pathway; IMP from hypoxanthine: step 1/1. Catalyzes a salvage reaction resulting in the formation of IMP that is energically less costly than de novo synthesis. This chain is Hypoxanthine/guanine phosphoribosyltransferase, found in Methanobacterium lacus (strain AL-21).